A 426-amino-acid polypeptide reads, in one-letter code: Serine hydroxymethyltransferase (426 aa).

Residues leucine 122 and 126–128 (GHL) contribute to the (6S)-5,6,7,8-tetrahydrofolate site. Lysine 231 bears the N6-(pyridoxal phosphate)lysine mark.

Belongs to the SHMT family. As to quaternary structure, homodimer. Pyridoxal 5'-phosphate is required as a cofactor.

Its subcellular location is the cytoplasm. It catalyses the reaction (6R)-5,10-methylene-5,6,7,8-tetrahydrofolate + glycine + H2O = (6S)-5,6,7,8-tetrahydrofolate + L-serine. Its pathway is one-carbon metabolism; tetrahydrofolate interconversion. It participates in amino-acid biosynthesis; glycine biosynthesis; glycine from L-serine: step 1/1. Its function is as follows. Catalyzes the reversible interconversion of serine and glycine with tetrahydrofolate (THF) serving as the one-carbon carrier. This reaction serves as the major source of one-carbon groups required for the biosynthesis of purines, thymidylate, methionine, and other important biomolecules. Also exhibits THF-independent aldolase activity toward beta-hydroxyamino acids, producing glycine and aldehydes, via a retro-aldol mechanism. The chain is Serine hydroxymethyltransferase from Koribacter versatilis (strain Ellin345).